Consider the following 475-residue polypeptide: Sulfate adenylyltransferase subunit 1 (475 aa).

A tr-type G domain is found at 25–239; the sequence is KSLLRFLTCG…EVLETVEIQR (215 aa). Residues 34–41 are G1; it reads GSVDDGKS. Position 34 to 41 (34 to 41) interacts with GTP; it reads GSVDDGKS. Residues 92 to 96 are G2; the sequence is GITID. A G3 region spans residues 113–116; sequence DTPG. Residues 113 to 117 and 168 to 171 each bind GTP; these read DTPGH and NKMD. Positions 168–171 are G4; the sequence is NKMD. The segment at 206–208 is G5; it reads SAL.

This sequence belongs to the TRAFAC class translation factor GTPase superfamily. Classic translation factor GTPase family. CysN/NodQ subfamily. In terms of assembly, heterodimer composed of CysD, the smaller subunit, and CysN.

It catalyses the reaction sulfate + ATP + H(+) = adenosine 5'-phosphosulfate + diphosphate. It functions in the pathway sulfur metabolism; hydrogen sulfide biosynthesis; sulfite from sulfate: step 1/3. Its function is as follows. With CysD forms the ATP sulfurylase (ATPS) that catalyzes the adenylation of sulfate producing adenosine 5'-phosphosulfate (APS) and diphosphate, the first enzymatic step in sulfur assimilation pathway. APS synthesis involves the formation of a high-energy phosphoric-sulfuric acid anhydride bond driven by GTP hydrolysis by CysN coupled to ATP hydrolysis by CysD. The chain is Sulfate adenylyltransferase subunit 1 from Shigella flexneri serotype 5b (strain 8401).